The sequence spans 321 residues: Glucokinase (321 aa).

8–13 (GDVGGT) contributes to the ATP binding site.

Belongs to the bacterial glucokinase family.

Its subcellular location is the cytoplasm. The catalysed reaction is D-glucose + ATP = D-glucose 6-phosphate + ADP + H(+). The sequence is that of Glucokinase from Shigella sonnei (strain Ss046).